Here is a 517-residue protein sequence, read N- to C-terminus: Cytochrome P450 monooxygenase polD (517 aa).

Residues 5–27 form a helical membrane-spanning segment; it reads VVLVGIVVLVLAYLSSTGKVYPH. Heme is bound at residue C435.

This sequence belongs to the cytochrome P450 family. It depends on heme as a cofactor.

It localises to the membrane. Its function is as follows. Cytochrome P450 monooxygenase; part of the gene cluster that mediates the biosynthesis of antifungal fernane-type triterpenoid polytolypin. PolD doe not seem to be involved in the biosynthesis of polytolypin. Within the pathway, the triterpene cyclase polA first catalyzes the cyclization of 2,3-oxidosqualene to motiol, polc converts the 4-alpha-methyl group of motiol to a carboxyl group, polB is responsible for appending a hydroxyl group at the 2-alpha position and polE is a dual functional P450, which can catalyze the formation of both the 1-beta-hydroxyl group and 10-beta-carboxyl group. The sequence is that of Cytochrome P450 monooxygenase polD from Polytolypa hystricis (strain UAMH7299).